Here is a 258-residue protein sequence, read N- to C-terminus: NAD kinase (258 aa).

The active-site Proton acceptor is the aspartate 44. NAD(+) contacts are provided by residues 44 to 45 (DG), 116 to 117 (NE), aspartate 146, alanine 154, and 157 to 162 (TAYNLS).

This sequence belongs to the NAD kinase family. Requires a divalent metal cation as cofactor.

It is found in the cytoplasm. The catalysed reaction is NAD(+) + ATP = ADP + NADP(+) + H(+). Involved in the regulation of the intracellular balance of NAD and NADP, and is a key enzyme in the biosynthesis of NADP. Catalyzes specifically the phosphorylation on 2'-hydroxyl of the adenosine moiety of NAD to yield NADP. This Zymomonas mobilis subsp. mobilis (strain ATCC 31821 / ZM4 / CP4) protein is NAD kinase.